The following is a 143-amino-acid chain: Small ribosomal subunit protein uS11c (143 aa).

Belongs to the universal ribosomal protein uS11 family. Part of the 30S ribosomal subunit.

It is found in the plastid. The protein resides in the chloroplast. The chain is Small ribosomal subunit protein uS11c from Hordeum vulgare (Barley).